The sequence spans 558 residues: Urease subunit alpha 2 (558 aa).

The Urease domain maps to 129 to 558 (GAVDTHVHLL…SVSLNRLYFL (430 aa)). Ni(2+) is bound by residues histidine 134, histidine 136, and lysine 214. Lysine 214 is modified (N6-carboxylysine). Histidine 216 contacts substrate. Residues histidine 243 and histidine 269 each coordinate Ni(2+). Histidine 317 serves as the catalytic Proton donor. Residue aspartate 357 coordinates Ni(2+).

Belongs to the metallo-dependent hydrolases superfamily. Urease alpha subunit family. In terms of assembly, may form a heterohexamer of 3 UreC (alpha) and 3 UreAB (gamma/beta) subunits. May also form a heterotrimer of UreA (gamma), UreB (beta) and UreC (alpha) subunits. Three heterotrimers associate to form the active enzyme. It depends on Ni cation as a cofactor. Post-translationally, carboxylation allows a single lysine to coordinate two nickel ions.

It localises to the cytoplasm. It catalyses the reaction urea + 2 H2O + H(+) = hydrogencarbonate + 2 NH4(+). Its pathway is nitrogen metabolism; urea degradation; CO(2) and NH(3) from urea (urease route): step 1/1. This is Urease subunit alpha 2 from Streptomyces coelicolor (strain ATCC BAA-471 / A3(2) / M145).